The primary structure comprises 638 residues: Paramyosin (638 aa).

Residues 1-638 (FSPSTTRLES…EGDISVMQAD (638 aa)) are a coiled coil.

The protein belongs to the paramyosin family. In terms of assembly, homodimer.

It is found in the cytoplasm. The protein resides in the myofibril. Its function is as follows. Paramyosin is a major structural component of many thick filaments isolated from invertebrate muscles. This chain is Paramyosin, found in Opisthorchis felineus.